A 246-amino-acid polypeptide reads, in one-letter code: Carboxy-S-adenosyl-L-methionine synthase (246 aa).

S-adenosyl-L-methionine contacts are provided by residues Y39, 64–66 (GCS), 89–90 (DN), 117–118 (DI), N132, and R199.

The protein belongs to the class I-like SAM-binding methyltransferase superfamily. Cx-SAM synthase family. In terms of assembly, homodimer.

It catalyses the reaction prephenate + S-adenosyl-L-methionine = carboxy-S-adenosyl-L-methionine + 3-phenylpyruvate + H2O. Its function is as follows. Catalyzes the conversion of S-adenosyl-L-methionine (SAM) to carboxy-S-adenosyl-L-methionine (Cx-SAM). This chain is Carboxy-S-adenosyl-L-methionine synthase, found in Enterobacter sp. (strain 638).